We begin with the raw amino-acid sequence, 456 residues long: RuvB-like 1 (456 aa).

A disordered region spans residues 1–20 (MKIEEVKSTTKTQRIASHSH). 70–77 (GPPGTGKT) is an ATP binding site.

This sequence belongs to the RuvB family. As to quaternary structure, forms homohexameric rings. Can form a dodecamer with ruvbl2 made of two stacked hexameric rings. Is a component of the RNA polymerase II holoenzyme complex. Component of the chromatin-remodeling Ino80 complex. Component of some MLL1/MLL complex.

The protein resides in the nucleus. The protein localises to the dynein axonemal particle. The catalysed reaction is ATP + H2O = ADP + phosphate + H(+). Its function is as follows. Has single-stranded DNA-stimulated ATPase and ATP-dependent DNA helicase (3' to 5') activity suggesting a role in nuclear processes such as recombination and transcription. Proposed core component of the chromatin remodeling Ino80 complex which exhibits DNA- and nucleosome-activated ATPase activity and catalyzes ATP-dependent nucleosome sliding. May act as a negative regulator of embryonic heart growth. The polypeptide is RuvB-like 1 (ruvbl1) (Danio rerio (Zebrafish)).